Consider the following 186-residue polypeptide: MMEEIDRFQVPPVNPEMKLLQDPAETSTIENETAPREPESVAINYKPSPLQVKIEKQRELARKGSVKNGTVGSPVNQQPKKNNVMARTRLVVPNKGYSSLDQSPDEKPLVALDTDSDDDFDMSRYSSSGYSSAEQINQDLNIQLLKDGYRLDEIPDDEDLDLIPPKSVNPTCMCCQATSSTACQIQ.

Disordered regions lie at residues 1–47 and 59–132; these read MMEE…NYKP and ELAR…GYSS. Residues 67–81 are compositionally biased toward polar residues; the sequence is KNGTVGSPVNQQPKK. Positions 123 to 132 are enriched in low complexity; it reads SRYSSSGYSS.

The protein belongs to the FAM219 family.

This chain is Protein FAM219A (fam219a), found in Danio rerio (Zebrafish).